Reading from the N-terminus, the 268-residue chain is Aliphatic sulfonates import ATP-binding protein SsuB 2 (268 aa).

One can recognise an ABC transporter domain in the interval 15–236 (LAVRKLQKTF…VRGSHRLAAL (222 aa)). Residue 47-54 (GRSGCGKS) participates in ATP binding.

This sequence belongs to the ABC transporter superfamily. Aliphatic sulfonates importer (TC 3.A.1.17.2) family. The complex is composed of two ATP-binding proteins (SsuB), two transmembrane proteins (SsuC) and a solute-binding protein (SsuA).

It localises to the cell inner membrane. The catalysed reaction is ATP + H2O + aliphatic sulfonate-[sulfonate-binding protein]Side 1 = ADP + phosphate + aliphatic sulfonateSide 2 + [sulfonate-binding protein]Side 1.. Part of the ABC transporter complex SsuABC involved in aliphatic sulfonates import. Responsible for energy coupling to the transport system. The sequence is that of Aliphatic sulfonates import ATP-binding protein SsuB 2 from Pseudomonas fluorescens (strain ATCC BAA-477 / NRRL B-23932 / Pf-5).